Reading from the N-terminus, the 473-residue chain is Photosystem II CP43 reaction center protein (473 aa).

Residues 1–14 constitute a propeptide that is removed on maturation; sequence MKILYSQRRFYHVE. T15 bears the N-acetylthreonine mark. T15 bears the Phosphothreonine mark. 5 consecutive transmembrane segments (helical) span residues 69–93, 134–155, 178–200, 255–275, and 291–312; these read LFEV…PHLA, LIGP…KDKN, KALY…RKIT, KPFA…LSYS, and WFNN…ASQA. Position 367 (E367) interacts with [CaMn4O5] cluster. A helical transmembrane segment spans residues 447–471; that stretch reads RARAAAAGFEKGIDRDFEPVLSMTP.

It belongs to the PsbB/PsbC family. PsbC subfamily. In terms of assembly, PSII is composed of 1 copy each of membrane proteins PsbA, PsbB, PsbC, PsbD, PsbE, PsbF, PsbH, PsbI, PsbJ, PsbK, PsbL, PsbM, PsbT, PsbX, PsbY, PsbZ, Psb30/Ycf12, at least 3 peripheral proteins of the oxygen-evolving complex and a large number of cofactors. It forms dimeric complexes. Requires Binds multiple chlorophylls and provides some of the ligands for the Ca-4Mn-5O cluster of the oxygen-evolving complex. It may also provide a ligand for a Cl- that is required for oxygen evolution. PSII binds additional chlorophylls, carotenoids and specific lipids. as cofactor.

The protein resides in the plastid. It is found in the chloroplast thylakoid membrane. In terms of biological role, one of the components of the core complex of photosystem II (PSII). It binds chlorophyll and helps catalyze the primary light-induced photochemical processes of PSII. PSII is a light-driven water:plastoquinone oxidoreductase, using light energy to abstract electrons from H(2)O, generating O(2) and a proton gradient subsequently used for ATP formation. This Physcomitrium patens (Spreading-leaved earth moss) protein is Photosystem II CP43 reaction center protein.